A 299-amino-acid polypeptide reads, in one-letter code: ATP phosphoribosyltransferase (299 aa).

This sequence belongs to the ATP phosphoribosyltransferase family. Long subfamily. Equilibrium between an active dimeric form, an inactive hexameric form and higher aggregates. Interconversion between the various forms is largely reversible and is influenced by the natural substrates and inhibitors of the enzyme. Mg(2+) serves as cofactor.

The protein localises to the cytoplasm. The catalysed reaction is 1-(5-phospho-beta-D-ribosyl)-ATP + diphosphate = 5-phospho-alpha-D-ribose 1-diphosphate + ATP. Its pathway is amino-acid biosynthesis; L-histidine biosynthesis; L-histidine from 5-phospho-alpha-D-ribose 1-diphosphate: step 1/9. Feedback inhibited by histidine. In terms of biological role, catalyzes the condensation of ATP and 5-phosphoribose 1-diphosphate to form N'-(5'-phosphoribosyl)-ATP (PR-ATP). Has a crucial role in the pathway because the rate of histidine biosynthesis seems to be controlled primarily by regulation of HisG enzymatic activity. This Salmonella dublin (strain CT_02021853) protein is ATP phosphoribosyltransferase.